We begin with the raw amino-acid sequence, 308 residues long: ABC transporter protein AbcA (308 aa).

The ABC transporter domain maps to 6 to 245 (LAVSGVNKSF…YHKLLHMEGD (240 aa)). 58 to 65 (GHNGAGKS) provides a ligand contact to ATP.

The protein belongs to the ABC transporter superfamily.

In terms of biological role, influences the expression of the surface array protein gene (vapA). May have both regulatory and transport activities. This Aeromonas salmonicida protein is ABC transporter protein AbcA (abcA).